The sequence spans 492 residues: Putative heme-binding protein VNG_2021C (492 aa).

Histidine 177 contributes to the heme binding site. The interval 253–301 (AGERVPAPEGGADAHGEGERTHHHGDSDHHDGDDGEQHHHSTGDEADDG) is disordered. Residues 264-301 (ADAHGEGERTHHHGDSDHHDGDDGEQHHHSTGDEADDG) show a composition bias toward basic and acidic residues. An ABM domain is found at 402 to 490 (GTMGMFYETK…VLADRPRHVF (89 aa)).

It in the N-terminal section; belongs to the ChdC family.

The polypeptide is Putative heme-binding protein VNG_2021C (Halobacterium salinarum (strain ATCC 700922 / JCM 11081 / NRC-1) (Halobacterium halobium)).